The following is a 159-amino-acid chain: Ribosome maturation factor RimP (159 aa).

Belongs to the RimP family.

It is found in the cytoplasm. Functionally, required for maturation of 30S ribosomal subunits. The polypeptide is Ribosome maturation factor RimP (Bordetella avium (strain 197N)).